The chain runs to 681 residues: Dipeptidyl carboxypeptidase (681 aa).

His470 contributes to the Zn(2+) binding site. The active site involves Glu471. The Zn(2+) site is built by His474 and His477.

This sequence belongs to the peptidase M3 family. Requires Zn(2+) as cofactor.

The protein localises to the cytoplasm. It catalyses the reaction Hydrolysis of unblocked, C-terminal dipeptides from oligopeptides, with broad specificity. Does not hydrolyze bonds in which P1' is Pro, or both P1 and P1' are Gly.. Stimulated by Mn(2+), Mg(2+), Co(2+) and Ca(2+), inhibited by Cu(2+), Ni(2+), Zn(2+), chymostatin and 1,10-phenanthroline. Removes dipeptides from the C-termini of N-blocked tripeptides, tetrapeptides and larger peptides. This chain is Dipeptidyl carboxypeptidase, found in Escherichia coli (strain K12).